Here is a 1202-residue protein sequence, read N- to C-terminus: DNA-directed RNA polymerase subunit beta (1202 aa).

Residues 1154–1202 are disordered; that stretch reads NMDEDDDEVVNVDALAKYAEEHKADDKKNEEENKSEATSTTTDDKTNQN. Basic and acidic residues predominate over residues 1171–1188; that stretch reads YAEEHKADDKKNEEENKS.

The protein belongs to the RNA polymerase beta chain family. In terms of assembly, the RNAP catalytic core consists of 2 alpha, 1 beta, 1 beta' and 1 omega subunit. When a sigma factor is associated with the core the holoenzyme is formed, which can initiate transcription.

The enzyme catalyses RNA(n) + a ribonucleoside 5'-triphosphate = RNA(n+1) + diphosphate. Functionally, DNA-dependent RNA polymerase catalyzes the transcription of DNA into RNA using the four ribonucleoside triphosphates as substrates. The polypeptide is DNA-directed RNA polymerase subunit beta (Limosilactobacillus reuteri (strain DSM 20016) (Lactobacillus reuteri)).